Here is a 108-residue protein sequence, read N- to C-terminus: Large ribosomal subunit protein uL24 (108 aa).

This sequence belongs to the universal ribosomal protein uL24 family. As to quaternary structure, part of the 50S ribosomal subunit.

In terms of biological role, one of two assembly initiator proteins, it binds directly to the 5'-end of the 23S rRNA, where it nucleates assembly of the 50S subunit. One of the proteins that surrounds the polypeptide exit tunnel on the outside of the subunit. This Salinispora tropica (strain ATCC BAA-916 / DSM 44818 / JCM 13857 / NBRC 105044 / CNB-440) protein is Large ribosomal subunit protein uL24.